The following is a 58-amino-acid chain: Lantibiotic macedovicin (58 aa).

Positions 1-25 (MMNATENQIFVETVSDQELEMLIGG) are excised as a propeptide. A 2,3-didehydrobutyrine mark is found at Thr33 and Thr35. 2 consecutive cross-links (beta-methyllanthionine (Thr-Cys)) follow at residues 33-38 (TLTKDC) and 35-57 (TKDCPNVISSICAGTIITACKNC). A disulfide bridge connects residues Cys46 and Cys54.

Maturation of macedovicin involves the enzymatic dehydration of Thr-33 and Thr-35 into dehydrobutyrine residues, that can form a beta-methyllanthionine bond with Cys-38 and Cys-57, respectively. This is followed by membrane translocation and cleavage of the modified precursor.

It is found in the secreted. Functionally, lanthionine-containing peptide antibiotic (lantibiotic) active on Gram-positive bacteria. Macedovicin inhibits a broad spectrum of lactic acid bacteria, several food spoilage species (e.g. Clostridium spp.) and oral streptococci. The bactericidal activity of lantibiotics is based on depolarization of energized bacterial cytoplasmic membranes, initiated by the formation of aqueous transmembrane pores. The sequence is that of Lantibiotic macedovicin from Streptococcus macedonicus (strain ACA-DC 198).